A 274-amino-acid polypeptide reads, in one-letter code: Acyl-[acyl-carrier-protein]--UDP-N-acetylglucosamine O-acyltransferase (274 aa).

The protein belongs to the transferase hexapeptide repeat family. LpxA subfamily. In terms of assembly, homotrimer.

The protein resides in the cytoplasm. The catalysed reaction is a (3R)-hydroxyacyl-[ACP] + UDP-N-acetyl-alpha-D-glucosamine = a UDP-3-O-[(3R)-3-hydroxyacyl]-N-acetyl-alpha-D-glucosamine + holo-[ACP]. It functions in the pathway glycolipid biosynthesis; lipid IV(A) biosynthesis; lipid IV(A) from (3R)-3-hydroxytetradecanoyl-[acyl-carrier-protein] and UDP-N-acetyl-alpha-D-glucosamine: step 1/6. In terms of biological role, involved in the biosynthesis of lipid A, a phosphorylated glycolipid that anchors the lipopolysaccharide to the outer membrane of the cell. The sequence is that of Acyl-[acyl-carrier-protein]--UDP-N-acetylglucosamine O-acyltransferase from Bartonella bacilliformis (strain ATCC 35685 / KC583 / Herrer 020/F12,63).